The following is a 94-amino-acid chain: Pyrimidine/purine nucleoside phosphorylase (94 aa).

This sequence belongs to the nucleoside phosphorylase PpnP family.

It catalyses the reaction a purine D-ribonucleoside + phosphate = a purine nucleobase + alpha-D-ribose 1-phosphate. The catalysed reaction is adenosine + phosphate = alpha-D-ribose 1-phosphate + adenine. The enzyme catalyses cytidine + phosphate = cytosine + alpha-D-ribose 1-phosphate. It carries out the reaction guanosine + phosphate = alpha-D-ribose 1-phosphate + guanine. It catalyses the reaction inosine + phosphate = alpha-D-ribose 1-phosphate + hypoxanthine. The catalysed reaction is thymidine + phosphate = 2-deoxy-alpha-D-ribose 1-phosphate + thymine. The enzyme catalyses uridine + phosphate = alpha-D-ribose 1-phosphate + uracil. It carries out the reaction xanthosine + phosphate = alpha-D-ribose 1-phosphate + xanthine. Functionally, catalyzes the phosphorolysis of diverse nucleosides, yielding D-ribose 1-phosphate and the respective free bases. Can use uridine, adenosine, guanosine, cytidine, thymidine, inosine and xanthosine as substrates. Also catalyzes the reverse reactions. This chain is Pyrimidine/purine nucleoside phosphorylase, found in Aeromonas hydrophila subsp. hydrophila (strain ATCC 7966 / DSM 30187 / BCRC 13018 / CCUG 14551 / JCM 1027 / KCTC 2358 / NCIMB 9240 / NCTC 8049).